Consider the following 178-residue polypeptide: MKMIISLTFLGILMLAFAEVNSETCTLMEAAKNFDENKYFNIPLAYATHSKNREPETNVCREYSTARGPDGKTVTTFTIKDKTLTSAVKCTNTPIPGSNGQFSSDCELSAGNRITVTTSILATDNEKYAILQRCPTSGPGNILVLQTNKNGVEQGVQNYFNQKGWDISTWLSRTTVGC.

Positions 1–18 (MKMIISLTFLGILMLAFA) are cleaved as a signal peptide. 3 cysteine pairs are disulfide-bonded: Cys25–Cys134, Cys60–Cys178, and Cys90–Cys106.

Belongs to the calycin superfamily. Triabin family. Expressed in salivary glands.

It localises to the secreted. In terms of biological role, inhibits platelet aggregation and vasoconstriction through binding to distinct eicosanoids involved in inflammation (acts as a scavenger), and has a role in inhibiting host innate immunity by impairing platelet-assisted formation of neutrophil extracellular traps (NETs). Inhibits platelet aggregation by collagen, and low doses of thromboxane A2 mimetic (TXA2 mimetic), and arachidonic acid (AA) without affecting aggregation induced by ADP, convulxin (GP6 agonist), and PMA. Binds to TXA2, TXB2, prostaglandine H2 mimetic (PGH2 mimetic), PGJ2, and PGF2alpha. Binding is not observed to leukotrienes, AA, and biogenic amines (PGE1, 5(S)-HETE, 12(S)-HETE, 20-HETE, norepinephrine, epinephrine, serotonin, LTC4 and ADP). Induces relaxation of aorta rat previously contracted with TXA2 mimetic. Moreover, it also impairs platelet-assisted formation of neutrophil extracellular traps (NETs). NETs are web-like structures of DNA and proteins that play an important role in killing of pathogens. In addition, NETs are implicated in thrombus formation. In vivo, this protein exhibits antithrombotic activity in two distinct mice models that are highly dependent on platelets. It is noteworthy that it inhibits thrombosis without promoting excessive bleeding. This Triatoma infestans (Assassin bug) protein is Platelet inhibitor triplatin-2.